The chain runs to 473 residues: ATP synthase subunit beta (473 aa).

158 to 165 lines the ATP pocket; sequence GGAGVGKT.

Belongs to the ATPase alpha/beta chains family. In terms of assembly, F-type ATPases have 2 components, CF(1) - the catalytic core - and CF(0) - the membrane proton channel. CF(1) has five subunits: alpha(3), beta(3), gamma(1), delta(1), epsilon(1). CF(0) has three main subunits: a(1), b(2) and c(9-12). The alpha and beta chains form an alternating ring which encloses part of the gamma chain. CF(1) is attached to CF(0) by a central stalk formed by the gamma and epsilon chains, while a peripheral stalk is formed by the delta and b chains.

The protein localises to the cell membrane. It catalyses the reaction ATP + H2O + 4 H(+)(in) = ADP + phosphate + 5 H(+)(out). Functionally, produces ATP from ADP in the presence of a proton gradient across the membrane. The catalytic sites are hosted primarily by the beta subunits. This Geobacillus stearothermophilus (Bacillus stearothermophilus) protein is ATP synthase subunit beta.